Here is a 299-residue protein sequence, read N- to C-terminus: Oxygen-dependent coproporphyrinogen-III oxidase (299 aa).

Residue serine 92 participates in substrate binding. The Mn(2+) site is built by histidine 96 and histidine 106. Residue histidine 106 is the Proton donor of the active site. Asparagine 108–arginine 110 is a substrate binding site. The Mn(2+) site is built by histidine 145 and histidine 175. An important for dimerization region spans residues tyrosine 240–glutamate 275. Glycine 258–arginine 260 is a binding site for substrate.

This sequence belongs to the aerobic coproporphyrinogen-III oxidase family. Homodimer. Mn(2+) serves as cofactor.

Its subcellular location is the cytoplasm. It carries out the reaction coproporphyrinogen III + O2 + 2 H(+) = protoporphyrinogen IX + 2 CO2 + 2 H2O. It participates in porphyrin-containing compound metabolism; protoporphyrin-IX biosynthesis; protoporphyrinogen-IX from coproporphyrinogen-III (O2 route): step 1/1. Its function is as follows. Involved in the heme biosynthesis. Catalyzes the aerobic oxidative decarboxylation of propionate groups of rings A and B of coproporphyrinogen-III to yield the vinyl groups in protoporphyrinogen-IX. This chain is Oxygen-dependent coproporphyrinogen-III oxidase, found in Escherichia coli (strain SE11).